A 132-amino-acid polypeptide reads, in one-letter code: Small ribosomal subunit protein uS8 (132 aa).

Belongs to the universal ribosomal protein uS8 family. Part of the 30S ribosomal subunit. Contacts proteins S5 and S12.

One of the primary rRNA binding proteins, it binds directly to 16S rRNA central domain where it helps coordinate assembly of the platform of the 30S subunit. The sequence is that of Small ribosomal subunit protein uS8 from Bradyrhizobium sp. (strain BTAi1 / ATCC BAA-1182).